Reading from the N-terminus, the 346-residue chain is Tryptophan--tRNA ligase (346 aa).

Residues 10 to 12 (QAS) and 18 to 19 (GN) contribute to the ATP site. Residues 11–19 (ASGKQHLGN) carry the 'HIGH' region motif. Asp-140 is a binding site for L-tryptophan. Residues 152–154 (GND), Ile-191, and 200–204 (KMSKS) contribute to the ATP site. A 'KMSKS' region motif is present at residues 200–204 (KMSKS).

This sequence belongs to the class-I aminoacyl-tRNA synthetase family. In terms of assembly, homodimer.

It is found in the cytoplasm. It catalyses the reaction tRNA(Trp) + L-tryptophan + ATP = L-tryptophyl-tRNA(Trp) + AMP + diphosphate + H(+). Catalyzes the attachment of tryptophan to tRNA(Trp). The chain is Tryptophan--tRNA ligase from Mycoplasma pneumoniae (strain ATCC 29342 / M129 / Subtype 1) (Mycoplasmoides pneumoniae).